The sequence spans 193 residues: Large ribosomal subunit protein uL18 (193 aa).

Belongs to the universal ribosomal protein uL18 family. Part of the 50S ribosomal subunit. Contacts the 5S and 23S rRNAs.

Functionally, this is one of the proteins that bind and probably mediate the attachment of the 5S RNA into the large ribosomal subunit, where it forms part of the central protuberance. This is Large ribosomal subunit protein uL18 from Methanococcus maripaludis (strain DSM 14266 / JCM 13030 / NBRC 101832 / S2 / LL).